The sequence spans 82 residues: Omega-conotoxin-like TxMKLT1-031 (82 aa).

The N-terminal stretch at 1–22 (MKLTCMMIVAVLFLTAWTLVMA) is a signal peptide. Positions 23-49 (DDSNNGLANLFSKSRDEMEDPEASKLE) are excised as a propeptide. 3 disulfides stabilise this stretch: C53-C71, C60-C76, and C70-C81.

Belongs to the conotoxin O1 superfamily. In terms of tissue distribution, expressed by the venom duct.

The protein resides in the secreted. Omega-conotoxins act at presynaptic membranes, they bind and block voltage-gated calcium channels (Cav). The sequence is that of Omega-conotoxin-like TxMKLT1-031 from Conus textile (Cloth-of-gold cone).